We begin with the raw amino-acid sequence, 540 residues long: MSVPAQTSVLIVGGGPAGSYAATVLAREGVDVVLLEAEKFPRYHIGESMLASIRFFLRFVELEEEFDRHGFEKKYGATFKITEKNPAYTDFAASLGEGGYSWNVVRSESDEIIFRYAGKCGAKTFDGTKVESLTFEPYPHEGFDESVHLANPGRPVSANWSRKDGSSGVIKFDYIIDGSGRNGLISTKYLKNRSFNQGLKNIANWTYWKGAKRFNVGEKNENSPLFEALKDGSGWVWAIPLHNDTISVGVVARQDAFFEKKKESGLSGEAFYKEYLKLAPQIKNELLRDATIVSDIKQATDWSYSASAYAGPNFRLIGDAGCFVDPYFSSGCHLAMTSALSASVSIQAVRRGQCDELTGAKWHTTKVAEGYTRFLLLVMTVQRQLRMKDKNIISTDEEEGFDMAFKKIQPVIQGVADTRTEDEQTQRRAAEAVDFSLESFEITPEKQAAVISKIERSQAEPELLEKLTPEEVHILGNIVNRTFEREKDELNLTHFTGDMIDGYSAKLEHGNIGLYKREKALLNGTASRAAAVLKSIHQVA.

The first 21 residues, 1–21 (MSVPAQTSVLIVGGGPAGSYA), serve as a signal peptide directing secretion. FAD is bound by residues Gly-14, Ala-17, and Glu-47. Asn-159, Asn-192, Asn-204, and Asn-243 each carry an N-linked (GlcNAc...) asparagine glycan. Chloride is bound by residues Ser-330 and Gly-331. Residues Asn-480, Asn-491, and Asn-523 are each glycosylated (N-linked (GlcNAc...) asparagine).

It belongs to the flavin-dependent halogenase family.

It participates in secondary metabolite biosynthesis. In terms of biological role, flavin-dependent halogenase; part of the gene cluster that mediates the biosynthesis of pestheic acid, a diphenyl ether which is a biosynthetic precursor of the unique chloropupukeananes. The biosynthesis initiates from condensation of acetate and malonate units catalyzed by the non-reducing PKS ptaA. As the ptaA protein is TE/CLC domain-deficient, hydrolysis and Claisen cyclization of the polyketide could be catalyzed by ptaB containing a beta-lactamase domain. The ptaB protein might hydrolyze the thioester bond between the ACP of ptaA and the intermediate to release atrochrysone carboxylic acid, which is spontaneously dehydrated to form endocrocin anthrone. Endocrocin anthrone is then converted to endocrocin, catalyzed by the anthrone oxygenase ptaC. Spontaneous decarboxylation of endocrocin occurs to generate emodin. An O-methyltransferase (ptaH or ptaI) could methylate emodin to form physcion. PtaJ could then catalyze the oxidative cleavage of physcion, and rotation of the intermediate could then afford desmethylisosulochrin. PtaF, a putative NADH-dependent oxidoreductase, might also participate in the oxidative cleavage step. Desmethylisosulochrin is then transformed by another O-methyltransferase (ptaH or ptaI) to form isosulochrin. Chlorination of isosulochrin by ptaM in the cyclohexadienone B ring then produces chloroisosulochrin. PtaE is responsible for the oxidative coupling reactions of both benzophenones isosulochrin and chloroisosulochrin to RES-1214-1 and pestheic acid respectively, regardless of chlorination. In Pestalotiopsis fici (strain W106-1 / CGMCC3.15140), this protein is Flavin-dependent halogenase ptaM.